A 298-amino-acid chain; its full sequence is 5,10-methylenetetrahydrofolate reductase (298 aa).

Glutamate 28 acts as the Proton donor/acceptor in catalysis. Threonine 59 serves as a coordination point for NADH. Residues tyrosine 60, alanine 62, histidine 88, arginine 118, glycine 119, aspartate 120, alanine 132, tyrosine 152, histidine 156, alanine 159, aspartate 165, asparagine 168, and lysine 172 each contribute to the FAD site. Aspartate 120 provides a ligand contact to (6S)-5-methyl-5,6,7,8-tetrahydrofolate. Position 183 (glutamine 183) interacts with NADH. (6S)-5-methyl-5,6,7,8-tetrahydrofolate is bound by residues glutamine 183, glutamine 219, and arginine 279.

Belongs to the methylenetetrahydrofolate reductase family. FAD serves as cofactor.

It carries out the reaction (6S)-5-methyl-5,6,7,8-tetrahydrofolate + NAD(+) = (6R)-5,10-methylene-5,6,7,8-tetrahydrofolate + NADH + H(+). Its pathway is one-carbon metabolism; tetrahydrofolate interconversion. It functions in the pathway amino-acid biosynthesis; L-methionine biosynthesis via de novo pathway. Its function is as follows. Catalyzes the NADH-dependent reduction of 5,10-methylenetetrahydrofolate to 5-methyltetrahydrofolate. Is required to provide the methyl group necessary for methionine synthetase to convert homocysteine to methionine; the methyl group is given by 5-methyltetrahydrofolate. This is 5,10-methylenetetrahydrofolate reductase (metF) from Pectobacterium carotovorum subsp. carotovorum (Erwinia carotovora subsp. carotovora).